Consider the following 304-residue polypeptide: UDP-N-acetylenolpyruvoylglucosamine reductase (304 aa).

The 166-residue stretch at 33–198 folds into the FAD-binding PCMH-type domain; it reads RVGGPVDILL…ITATFCFESG (166 aa). Residue R177 is part of the active site. The Proton donor role is filled by S227. Residue E297 is part of the active site.

It belongs to the MurB family. The cofactor is FAD.

It localises to the cytoplasm. It carries out the reaction UDP-N-acetyl-alpha-D-muramate + NADP(+) = UDP-N-acetyl-3-O-(1-carboxyvinyl)-alpha-D-glucosamine + NADPH + H(+). The protein operates within cell wall biogenesis; peptidoglycan biosynthesis. In terms of biological role, cell wall formation. The protein is UDP-N-acetylenolpyruvoylglucosamine reductase of Clostridium botulinum (strain Alaska E43 / Type E3).